A 179-amino-acid chain; its full sequence is Putative BPIFA4P protein (179 aa).

The signal sequence occupies residues 1–20 (MLNVSGLFVLLCGLLVSSSA).

The protein belongs to the BPI/LBP/Plunc superfamily. Plunc family. Expressed in breast cancer and salivary gland.

It localises to the secreted. Its function is as follows. Major protein in sweat, has surfactant properties. This Homo sapiens (Human) protein is Putative BPIFA4P protein (BPIFA4P).